The following is a 192-amino-acid chain: Holliday junction branch migration complex subunit RuvA (192 aa).

The domain I stretch occupies residues 1-61 (MFEYLKGIVA…DTGITLYGFL (61 aa)). The tract at residues 62 to 137 (SLEDKELFLK…KLGDYVKKSA (76 aa)) is domain II. A flexible linker region spans residues 137–140 (AVAT). The interval 141–192 (DLTPSLQDALLALVALGYTQKEVDRITPKLAKLPENTADGYIKEALALLLKK) is domain III.

It belongs to the RuvA family. Homotetramer. Forms an RuvA(8)-RuvB(12)-Holliday junction (HJ) complex. HJ DNA is sandwiched between 2 RuvA tetramers; dsDNA enters through RuvA and exits via RuvB. An RuvB hexamer assembles on each DNA strand where it exits the tetramer. Each RuvB hexamer is contacted by two RuvA subunits (via domain III) on 2 adjacent RuvB subunits; this complex drives branch migration. In the full resolvosome a probable DNA-RuvA(4)-RuvB(12)-RuvC(2) complex forms which resolves the HJ.

Its subcellular location is the cytoplasm. The RuvA-RuvB-RuvC complex processes Holliday junction (HJ) DNA during genetic recombination and DNA repair, while the RuvA-RuvB complex plays an important role in the rescue of blocked DNA replication forks via replication fork reversal (RFR). RuvA specifically binds to HJ cruciform DNA, conferring on it an open structure. The RuvB hexamer acts as an ATP-dependent pump, pulling dsDNA into and through the RuvAB complex. HJ branch migration allows RuvC to scan DNA until it finds its consensus sequence, where it cleaves and resolves the cruciform DNA. This is Holliday junction branch migration complex subunit RuvA from Lactobacillus gasseri (strain ATCC 33323 / DSM 20243 / BCRC 14619 / CIP 102991 / JCM 1131 / KCTC 3163 / NCIMB 11718 / NCTC 13722 / AM63).